The sequence spans 253 residues: Peptidase inhibitor R3HDML (253 aa).

The signal sequence occupies residues 1 to 24; sequence MPLLPSTVGLAGLLFWAGQAVNAL. The propeptide occupies 25 to 56; that stretch reads IMPNATPAPAQPESTAMRLLSGLEVPRYRRKR. The SCP domain maps to 67–207; that stretch reads LDYHNHIRAS…HRAAYLVCNY (141 aa). The N-linked (GlcNAc...) asparagine glycan is linked to Asn-120.

This sequence belongs to the CRISP family.

It is found in the secreted. Functionally, putative serine protease inhibitor. This is Peptidase inhibitor R3HDML (R3HDML) from Homo sapiens (Human).